The following is a 296-amino-acid chain: Stanniocalcin-2 (296 aa).

Residues Met1 to Gly24 form the signal peptide. Residues Pro21–Arg44 form a disordered region. The span at Gly24–Arg44 shows a compositional bias: polar residues. Asn73 carries an N-linked (GlcNAc...) asparagine glycan. A disordered region spans residues Pro218–Arg296. Basic and acidic residues predominate over residues Arg240–Ser258. Residues Gly272–Ser282 are compositionally biased toward low complexity.

It belongs to the stanniocalcin family. As to quaternary structure, homodimer; disulfide-linked. In terms of tissue distribution, found in a variety of tissues including skeletal muscle, small intestine, kidney, liver and brain.

The protein resides in the secreted. In terms of biological role, has an anti-hypocalcemic action on calcium and phosphate homeostasis. This is Stanniocalcin-2 (Stc2) from Mus musculus (Mouse).